The chain runs to 500 residues: ATP synthase subunit alpha, sodium ion specific (500 aa).

169 to 176 (GDRQTGKT) contacts ATP.

The protein belongs to the ATPase alpha/beta chains family. F-type ATPases have 2 components, CF(1) - the catalytic core - and CF(0) - the membrane proton channel. CF(1) has five subunits: alpha(3), beta(3), gamma(1), delta(1), epsilon(1). CF(0) has three main subunits: a, b and c.

The protein resides in the cell membrane. The catalysed reaction is 4 Na(+)(in) + ATP + H2O = 4 Na(+)(out) + ADP + phosphate + H(+). In terms of biological role, produces ATP from ADP in the presence of a sodium ion gradient across the membrane. The alpha chain is a regulatory subunit. The sequence is that of ATP synthase subunit alpha, sodium ion specific from Propionigenium modestum.